Reading from the N-terminus, the 456-residue chain is tRNA modification GTPase MnmE (456 aa).

(6S)-5-formyl-5,6,7,8-tetrahydrofolate is bound by residues arginine 26, glutamate 86, and arginine 125. Residues glycine 222 to phenylalanine 376 enclose the TrmE-type G domain. Asparagine 232 lines the K(+) pocket. GTP contacts are provided by residues asparagine 232–serine 237, threonine 251–threonine 257, and aspartate 276–glycine 279. Serine 236 is a Mg(2+) binding site. The K(+) site is built by threonine 251, isoleucine 253, and threonine 256. Threonine 257 serves as a coordination point for Mg(2+). Lysine 456 contributes to the (6S)-5-formyl-5,6,7,8-tetrahydrofolate binding site.

This sequence belongs to the TRAFAC class TrmE-Era-EngA-EngB-Septin-like GTPase superfamily. TrmE GTPase family. As to quaternary structure, homodimer. Heterotetramer of two MnmE and two MnmG subunits. It depends on K(+) as a cofactor.

It localises to the cytoplasm. Exhibits a very high intrinsic GTPase hydrolysis rate. Involved in the addition of a carboxymethylaminomethyl (cmnm) group at the wobble position (U34) of certain tRNAs, forming tRNA-cmnm(5)s(2)U34. The chain is tRNA modification GTPase MnmE from Streptococcus thermophilus (strain CNRZ 1066).